Reading from the N-terminus, the 343-residue chain is Mitochondrial import inner membrane translocase subunit TIM50-A (343 aa).

Topologically, residues 1-57 (MHKIVWFGTLNKSIGYIGKKKTCLLSPCEKICLNSARKTVQRCDKNYSPPKLRRIKN) are mitochondrial matrix. The chain crosses the membrane as a helical span at residues 58–77 (FYTYSVVLGSLFSIVMWAIY). Residues 78–343 (KLGKPEEDHR…GRSLRGSSIK (266 aa)) are Mitochondrial intermembrane-facing. One can recognise an FCP1 homology domain in the interval 135–278 (YIQPPYSLVL…FDLTAFLQLI (144 aa)).

It belongs to the TIM50 family. In terms of assembly, component of the TIM23 complex at least composed of Tim23, Tim17 (Tim17a1, Tim17a2 or Tim17b1) and a Tim50. As to expression, exclusively expressed in the testis.

The protein resides in the mitochondrion inner membrane. In terms of biological role, essential component of the TIM23 complex, a complex that mediates the translocation of transit peptide-containing proteins across the mitochondrial inner membrane. The polypeptide is Mitochondrial import inner membrane translocase subunit TIM50-A (ttm3) (Drosophila melanogaster (Fruit fly)).